The chain runs to 273 residues: L-fucose dehydrogenase (273 aa).

NAD(+) is bound by residues R19, I21, D40, K41, D62, V63, N89, Y154, K158, I187, T189, and L191. The active-site Proton acceptor is the Y154.

The protein belongs to the short-chain dehydrogenases/reductases (SDR) family. Homotetramer.

Its subcellular location is the cytoplasm. It catalyses the reaction L-fucose + NAD(+) = L-fucono-1,5-lactone + NADH + H(+). The catalysed reaction is D-arabinose + NAD(+) = D-arabinono-1,5-lactone + NADH + H(+). It carries out the reaction L-galactose + NAD(+) = L-galactono-1,5-lactone + NADH + H(+). The protein operates within carbohydrate degradation; L-fucose degradation. Its function is as follows. Catalyzes the NAD(+)-dependent oxidation of L-fucose, yielding L-fucono-1,5-lactone, which rapidly converts spontaneously to L-fucone-1,4-lactone. Can also act on D-arabinose and L-galactose, with lower catalytic efficiency. Does not use NADPH. May be the initial enzyme of the putative L-fucose degradation pathway in mammals. The protein is L-fucose dehydrogenase of Mus musculus (Mouse).